A 398-amino-acid chain; its full sequence is ATP-dependent RNA helicase eIF4A (398 aa).

Residues 25–53 (DSFDTMNLKPELLRGVYAYGFERPSAIQQ) carry the Q motif motif. The 171-residue stretch at 56 to 226 (IMPVIKGHDV…TKFMRDPVRI (171 aa)) folds into the Helicase ATP-binding domain. An ATP-binding site is contributed by 69 to 76 (AQSGTGKT). The DEAD box signature appears at 174-177 (DEAD). Residues 237–398 (GIKQFYIAVE…EMPMNVADLI (162 aa)) enclose the Helicase C-terminal domain.

It belongs to the DEAD box helicase family. eIF4A subfamily. In terms of assembly, component of the eIF4F complex, which composition varies with external and internal environmental conditions. It is composed of at least eIF4A, eIF4E and eIF4G.

The protein localises to the cytoplasm. The enzyme catalyses ATP + H2O = ADP + phosphate + H(+). Functionally, ATP-dependent RNA helicase which is a subunit of the eIF4F complex involved in cap recognition and is required for mRNA binding to ribosome. In the current model of translation initiation, eIF4A unwinds RNA secondary structures in the 5'-UTR of mRNAs which is necessary to allow efficient binding of the small ribosomal subunit, and subsequent scanning for the initiator codon. The chain is ATP-dependent RNA helicase eIF4A (tif1) from Botryotinia fuckeliana (strain B05.10) (Noble rot fungus).